Consider the following 251-residue polypeptide: Triosephosphate isomerase (251 aa).

Substrate is bound at residue 9–11 (NWK). Catalysis depends on His-95, which acts as the Electrophile. The Proton acceptor role is filled by Glu-167. Residues Gly-173, Ser-213, and 234-235 (GG) each bind substrate. Ser-213 is subject to Phosphoserine.

This sequence belongs to the triosephosphate isomerase family. In terms of assembly, homodimer.

It localises to the cytoplasm. It catalyses the reaction D-glyceraldehyde 3-phosphate = dihydroxyacetone phosphate. It participates in carbohydrate biosynthesis; gluconeogenesis. Its pathway is carbohydrate degradation; glycolysis; D-glyceraldehyde 3-phosphate from glycerone phosphate: step 1/1. Involved in the gluconeogenesis. Catalyzes stereospecifically the conversion of dihydroxyacetone phosphate (DHAP) to D-glyceraldehyde-3-phosphate (G3P). The sequence is that of Triosephosphate isomerase from Priestia megaterium (strain DSM 319 / IMG 1521) (Bacillus megaterium).